The primary structure comprises 101 residues: Apolipoprotein C-II (101 aa).

Positions 1–22 (MGTRYFLVGFLILLVLGFEVQG) are cleaved as a signal peptide. Positions 66–74 (AVDEKIRDI) are lipid binding. The interval 78–101 (STAAVTTYAGIITDQVFSVLSGKD) is lipoprotein lipase cofactor.

Belongs to the apolipoprotein C2 family. Proapolipoprotein C-II is synthesized as a sialic acid containing glycoprotein which is subsequently desialylated prior to its proteolytic processing. In terms of processing, proapolipoprotein C-II undergoes proteolytic cleavage of its N-terminal hexapeptide to generate apolipoprotein C-II. In bovine, proapolipoprotein C-II was found to be the minor form whereas apolipoprotein C-II was found to be the major form in plasma.

Its subcellular location is the secreted. In terms of biological role, component of chylomicrons, very low-density lipoproteins (VLDL), low-density lipoproteins (LDL), and high-density lipoproteins (HDL) in plasma. Plays an important role in lipoprotein metabolism as an activator of lipoprotein lipase. Both proapolipoprotein C-II and apolipoprotein C-II can activate lipoprotein lipase. In Bos taurus (Bovine), this protein is Apolipoprotein C-II (APOC2).